The chain runs to 401 residues: Elongation factor Tu, apicoplast (401 aa).

A tr-type G domain is found at 10 to 206 (KPHINIGTIG…ALDSYIPLPK (197 aa)). Positions 19–26 (GHVDHGKT) are G1. GTP is bound at residue 19-26 (GHVDHGKT). T26 is a Mg(2+) binding site. A G2 region spans residues 60–64 (GITIK). Residues 81-84 (DCPG) form a G3 region. GTP contacts are provided by residues 81–85 (DCPGH) and 136–139 (NKID). Positions 136–139 (NKID) are G4. A G5 region spans residues 173-175 (SAL).

It belongs to the TRAFAC class translation factor GTPase superfamily. Classic translation factor GTPase family. EF-Tu/EF-1A subfamily. As to quaternary structure, monomer.

The protein localises to the plastid. It is found in the apicoplast. It carries out the reaction GTP + H2O = GDP + phosphate + H(+). Functionally, GTP hydrolase that promotes the GTP-dependent binding of aminoacyl-tRNA to the A-site of ribosomes during protein biosynthesis. The sequence is that of Elongation factor Tu, apicoplast (tufA) from Toxoplasma gondii.